A 221-amino-acid polypeptide reads, in one-letter code: ATP-dependent dethiobiotin synthetase BioD (221 aa).

11–16 (DVGKTF) is an ATP binding site. Residue T15 coordinates Mg(2+). K35 is a catalytic residue. T39 is a substrate binding site. ATP contacts are provided by residues D44 and 103–106 (EGAG). Mg(2+) is bound by residues D44 and E103.

The protein belongs to the dethiobiotin synthetase family. As to quaternary structure, homodimer. Mg(2+) is required as a cofactor.

It is found in the cytoplasm. It carries out the reaction (7R,8S)-7,8-diammoniononanoate + CO2 + ATP = (4R,5S)-dethiobiotin + ADP + phosphate + 3 H(+). It functions in the pathway cofactor biosynthesis; biotin biosynthesis; biotin from 7,8-diaminononanoate: step 1/2. Catalyzes a mechanistically unusual reaction, the ATP-dependent insertion of CO2 between the N7 and N8 nitrogen atoms of 7,8-diaminopelargonic acid (DAPA, also called 7,8-diammoniononanoate) to form a ureido ring. This chain is ATP-dependent dethiobiotin synthetase BioD, found in Leptospira interrogans serogroup Icterohaemorrhagiae serovar copenhageni (strain Fiocruz L1-130).